Reading from the N-terminus, the 324-residue chain is uncharacterized protein (324 aa).

Residues 1 to 58 (MDIKVMEYAAEIARRQSFTKAAEHLHIAQPSLSQQIKKLEAELGLTLFHRSHGSVTLT) form the HTH lysR-type domain. Residues 18 to 37 (FTKAAEHLHIAQPSLSQQIK) constitute a DNA-binding region (H-T-H motif).

Belongs to the LysR transcriptional regulatory family.

This is an uncharacterized protein from Bacillus subtilis (strain 168).